The chain runs to 303 residues: Sporulation regulatory protein (303 aa).

A FtsK domain is found at Thr26–Glu213. Gly43–Ser50 is an ATP binding site.

Functionally, involved in sporulation inhibition and pock formation. This is Sporulation regulatory protein (spi) from Streptomyces azureus.